The sequence spans 217 residues: Small ribosomal subunit protein uS3c (217 aa).

One can recognise a KH type-2 domain in the interval 47–118; it reads IQKHVKSVSN…NLRVTLTGVI (72 aa).

This sequence belongs to the universal ribosomal protein uS3 family. Part of the 30S ribosomal subunit.

The protein resides in the plastid. It is found in the chloroplast. The chain is Small ribosomal subunit protein uS3c (rps3) from Adiantum capillus-veneris (Maidenhair fern).